The primary structure comprises 506 residues: MAALLRRLLQRGRPLAASGRRVGRREARLGTGPGVAVRVRFAPSPTGFLHLGGLRTALYNYIFAKKYQGSFILRLEDTDQTRFVPGAAENIENMLEWAGIPPDESPRRGGPAGPYQQSQRLELYAQATEALLKTGAAYPCFCSPQRLELLKKEALRNHQMPRYDNRCRNMSQEQVAQKLAKDPKPAIRFRLEQAAPAFEDLVYGWNRHDVASVEGDPVIMKSDGFPTYHLACVVDDHHMGISHVLRGSEWLISTAKHLLLYQALGWHPPHFAHLPLLLNRDGSKLSKRQGDIFLEHFAAEGFLPDSLLDIITNCGSGFAENQMGRTLPELITQFNLTRVTCHSALLDLEKLPEFNRLHLQRLVNNESQRCQLVEKLQALVEEAFGSQLQNRDVLNPIYMERILLLRQGHICRLQDLVSPVYSYLWTRPSVGRAQLDAISEEVDVIAKRVLGLLERSGMSLTQDMLSGELKKLSEGLEGTKHSNVMKLLRVALSGQQALSSMFKVQG.

Residues 1–41 (MAALLRRLLQRGRPLAASGRRVGRREARLGTGPGVAVRVRF) constitute a mitochondrion transit peptide. An L-glutamate-binding site is contributed by 40 to 42 (RFA). The short motif at 45-53 (PTGFLHLGG) is the 'HIGH' region element. Histidine 50 contacts ATP. L-glutamate contacts are provided by residues glutamate 76, 228 to 232 (YHLAC), and arginine 246. Glutamate 249 is an ATP binding site. An N6-succinyllysine modification is found at lysine 256. 284 to 288 (KLSKR) is a binding site for ATP. The short motif at 284 to 288 (KLSKR) is the 'KMSKS' region element. Residue lysine 486 is modified to N6-acetyllysine.

It belongs to the class-I aminoacyl-tRNA synthetase family. Glutamate--tRNA ligase type 1 subfamily.

It localises to the mitochondrion matrix. The enzyme catalyses tRNA(Glx) + L-glutamate + ATP = L-glutamyl-tRNA(Glx) + AMP + diphosphate. It catalyses the reaction tRNA(Glu) + L-glutamate + ATP = L-glutamyl-tRNA(Glu) + AMP + diphosphate. The catalysed reaction is tRNA(Gln) + L-glutamate + ATP = L-glutamyl-tRNA(Gln) + AMP + diphosphate. Functionally, non-discriminating glutamyl-tRNA synthetase that catalyzes aminoacylation of both mitochondrial tRNA(Glu) and tRNA(Gln) and participates in RNA aminoacylation for mitochondrial protein translation. Attachs glutamate to tRNA(Glu) or tRNA(Gln) in a two-step reaction: glutamate is first activated by ATP to form Glu-AMP and then transferred to the acceptor end of tRNA(Glu) or tRNA(Gln). In vitro, cytoplasmic tRNA(Gln) is slightly glutamylated, but with low activity. The polypeptide is Nondiscriminating glutamyl-tRNA synthetase EARS2, mitochondrial (Macaca fascicularis (Crab-eating macaque)).